Consider the following 75-residue polypeptide: Small ribosomal subunit protein bS16c (75 aa).

This sequence belongs to the bacterial ribosomal protein bS16 family.

The protein localises to the plastid. It is found in the chloroplast. This Cyanidium caldarium (Red alga) protein is Small ribosomal subunit protein bS16c.